Consider the following 678-residue polypeptide: PTS system glucose-specific EIICBA component (678 aa).

In terms of domain architecture, PTS EIIC type-1 spans 3-414 (KKLFGQLQRI…FKYKTPGRED (412 aa)). Transmembrane regions (helical) follow at residues 16 to 36 (LMLP…GTAM), 63 to 83 (AGGI…AIGL), 89 to 109 (VAAI…GAFL), 126 to 146 (VLGI…GALA), 170 to 190 (FVPI…AWIW), 211 to 231 (LAVF…LHHI), 273 to 293 (FMQG…LAIY), 303 to 323 (VVAG…ITEP), 329 to 349 (LFVA…SFLI), 355 to 375 (VHLG…GVLP), and 382 to 402 (LVIP…RFLI). The 82-residue stretch at 425-506 (SELPFNVLKA…SLIMKGEITK (82 aa)) folds into the PTS EIIB type-1 domain. Catalysis depends on cysteine 447, which acts as the Phosphocysteine intermediate; for EIIB activity. A PTS EIIA type-1 domain is found at 547–651 (DQVFAQKMMG…STVTPLIITN (105 aa)). Residue histidine 599 is the Tele-phosphohistidine intermediate; for EIIA activity of the active site.

It localises to the cell membrane. It carries out the reaction N(pros)-phospho-L-histidyl-[protein] + D-glucose(out) = D-glucose 6-phosphate(in) + L-histidyl-[protein]. The phosphoenolpyruvate-dependent sugar phosphotransferase system (sugar PTS), a major carbohydrate active transport system, catalyzes the phosphorylation of incoming sugar substrates concomitantly with their translocation across the cell membrane. This system is involved in glucose transport. This is PTS system glucose-specific EIICBA component (ptsG) from Staphylococcus saprophyticus subsp. saprophyticus (strain ATCC 15305 / DSM 20229 / NCIMB 8711 / NCTC 7292 / S-41).